We begin with the raw amino-acid sequence, 169 residues long: uncharacterized protein (169 aa).

One can recognise an HD domain in the interval 18-130 (VVEHCLAVSE…VAHADNLIFG (113 aa)).

This is an uncharacterized protein from Methanocaldococcus jannaschii (strain ATCC 43067 / DSM 2661 / JAL-1 / JCM 10045 / NBRC 100440) (Methanococcus jannaschii).